The chain runs to 352 residues: Diacylglycerol acyltransferase/mycolyltransferase Ag85C (352 aa).

The first 37 residues, 1–37, serve as a signal peptide directing secretion; the sequence is MSFIEKVRKLRGAAATMPRRLAIAAVGASLLSGVAVA. 86 to 87 contacts substrate; it reads LR. Positions 102–112 are fibronectin-binding; that stretch reads FEEFYQSGLSV. Substrate-binding residues include serine 170 and asparagine 198. Serine 170 functions as the Nucleophile in the catalytic mechanism. The active site involves glutamate 274. Residues 276–279 and 306–308 contribute to the substrate site; these read LTLR and HSW. The active site involves histidine 306. Residues 332-352 form a disordered region; it reads TAAPAQPAQPAQPAQPAQPAT. The span at 333–352 shows a compositional bias: low complexity; that stretch reads AAPAQPAQPAQPAQPAQPAT.

Belongs to the mycobacterial A85 antigen family. As to quaternary structure, homodimer.

It is found in the secreted. It carries out the reaction an acyl-CoA + a 1,2-diacyl-sn-glycerol = a triacyl-sn-glycerol + CoA. It catalyses the reaction 2 alpha,alpha'-trehalose 6-mycolate = alpha,alpha'-trehalose 6,6'-bismycolate + alpha,alpha-trehalose. Its function is as follows. The antigen 85 proteins (FbpA, FbpB, FbpC) are responsible for the high affinity of mycobacteria to fibronectin, a large adhesive glycoprotein, which facilitates the attachment of M.tuberculosis to murine alveolar macrophages (AMs). They also help to maintain the integrity of the cell wall by catalyzing the transfer of mycolic acids to cell wall arabinogalactan and through the synthesis of alpha,alpha-trehalose dimycolate (TDM, cord factor). They catalyze the transfer of a mycoloyl residue from one molecule of alpha,alpha-trehalose monomycolate (TMM) to another TMM, leading to the formation of TDM. The chain is Diacylglycerol acyltransferase/mycolyltransferase Ag85C (fbpC) from Mycobacterium avium.